A 184-amino-acid chain; its full sequence is Ribosome-recycling factor (184 aa).

It belongs to the RRF family.

The protein localises to the cytoplasm. In terms of biological role, responsible for the release of ribosomes from messenger RNA at the termination of protein biosynthesis. May increase the efficiency of translation by recycling ribosomes from one round of translation to another. In Desulfotalea psychrophila (strain LSv54 / DSM 12343), this protein is Ribosome-recycling factor.